A 290-amino-acid chain; its full sequence is 4-diphosphocytidyl-2-C-methyl-D-erythritol kinase (290 aa).

Residue lysine 8 is part of the active site. 92–102 (PISAGLAGGST) serves as a coordination point for ATP. Aspartate 134 is an active-site residue.

It belongs to the GHMP kinase family. IspE subfamily.

The catalysed reaction is 4-CDP-2-C-methyl-D-erythritol + ATP = 4-CDP-2-C-methyl-D-erythritol 2-phosphate + ADP + H(+). It functions in the pathway isoprenoid biosynthesis; isopentenyl diphosphate biosynthesis via DXP pathway; isopentenyl diphosphate from 1-deoxy-D-xylulose 5-phosphate: step 3/6. In terms of biological role, catalyzes the phosphorylation of the position 2 hydroxy group of 4-diphosphocytidyl-2C-methyl-D-erythritol. This chain is 4-diphosphocytidyl-2-C-methyl-D-erythritol kinase, found in Caldicellulosiruptor saccharolyticus (strain ATCC 43494 / DSM 8903 / Tp8T 6331).